We begin with the raw amino-acid sequence, 615 residues long: MSEPGKGDDCLELESSMAESRLRAPDLGVSRCLGKCQKNSPGARKHPFSGKSFYLDLPAGKNLQFLTGAIQQLGGVIEGFLSKEVSYIVSSRREVKAESSGKSHRGCPSPSPSEVRVETSAMVDPKGSHPRPSRKPVDSVPLSRGKELLQKAIRNQGSISGGGSGGSSSLLTNARSWGVRILHVDEMMMHVQQLSLASLCVKKQQPKKPEGTCPAAESRTRKVARLKAPFLKIEDESRKFRPFHHQFKSFPEISFLGPKDASPFEAPTTLGSMHHTRESKDGEPSPRSAAHTMPRRKKGYCECCQEAFEELHVHLQSAQHRSFALEAHLYAEVDRIIAQLSHSFADIPFQAGLPRWSGSPASDCDPLCPETLHPHQPSHPRAASPRIRKEDSCQASVTQGRAAGQQRWTESLDGVMGPPASHTCVSATTLLPALPKGSREQGCLCPCPASFTQSHLVTSLALLPGEWSPAEDMPLHPSQENSFAPADIPVKGPLLFPEARPWLMSARCWVRPFPFVTWGCLIPHDTTPLHEEVSPCPCLRLGYLYLLLTQSLWCRVRVPSLSTAGPIPRTSHPCTLAFPSYLNDHDLGHLCQAKPQGWNTPQPFLHCGFLAVDSG.

The 91-residue stretch at 43–133 folds into the BRCT domain; that stretch reads ARKHPFSGKS…DPKGSHPRPS (91 aa). 2 disordered regions span residues 93 to 141 and 264 to 293; these read REVK…DSVP and FEAP…AHTM. Basic and acidic residues predominate over residues 275-284; it reads HTRESKDGEP. The DBF4-type zinc finger occupies 294 to 343; the sequence is PRRKKGYCECCQEAFEELHVHLQSAQHRSFALEAHLYAEVDRIIAQLSHS. Zn(2+) is bound by residues C301, C304, H314, and H320. The tract at residues 371–407 is disordered; it reads TLHPHQPSHPRAASPRIRKEDSCQASVTQGRAAGQQR.

In terms of assembly, forms a complex with CDC7. Note that CDC7 forms distinct complex either with DBF4/DBF4A or DBF4B. Such complexes are stable upon replication stress. Phosphorylated. Widely expressed. Highly expressed in testis.

It localises to the nucleus. Its function is as follows. Regulatory subunit for CDC7 which activates its kinase activity thereby playing a central role in DNA replication and cell proliferation. Required for progression of S and M phases. The complex CDC7-DBF4B selectively phosphorylates MCM2 subunit at 'Ser-40' and then is involved in regulating the initiation of DNA replication during cell cycle. The sequence is that of Protein DBF4 homolog B (DBF4B) from Homo sapiens (Human).